We begin with the raw amino-acid sequence, 237 residues long: NADH-ubiquinone oxidoreductase assembly factor N7BML (237 aa).

Basic and acidic residues predominate over residues 214-223 (VEKERDDSGK). Positions 214–237 (VEKERDDSGKPAEWTPKAAVRRRG) are disordered.

This sequence belongs to the complex I NDUFA12 subunit family.

The protein localises to the mitochondrion. Functionally, acts as an assembly factor of mitochondrial complex I. This Yarrowia lipolytica (strain CLIB 122 / E 150) (Yeast) protein is NADH-ubiquinone oxidoreductase assembly factor N7BML.